Consider the following 254-residue polypeptide: Alcohol dehydrogenase (254 aa).

10 to 33 lines the NAD(+) pocket; it reads FVAGLGGIGLDTSREIVKSGPKNL. S138 contributes to the substrate binding site. Y151 serves as the catalytic Proton acceptor.

Belongs to the short-chain dehydrogenases/reductases (SDR) family. As to quaternary structure, homodimer.

The catalysed reaction is a primary alcohol + NAD(+) = an aldehyde + NADH + H(+). The enzyme catalyses a secondary alcohol + NAD(+) = a ketone + NADH + H(+). The sequence is that of Alcohol dehydrogenase (Adh) from Drosophila flavomontana (Fruit fly).